Reading from the N-terminus, the 428-residue chain is UDP-N-acetylglucosamine 1-carboxyvinyltransferase 2 (428 aa).

22 to 23 (KN) lines the phosphoenolpyruvate pocket. Residue Arg-92 coordinates UDP-N-acetyl-alpha-D-glucosamine. Residue Cys-116 is the Proton donor of the active site. Cys-116 is modified (2-(S-cysteinyl)pyruvic acid O-phosphothioketal). UDP-N-acetyl-alpha-D-glucosamine contacts are provided by residues 121-125 (RPIDQ), Asp-304, and Ile-326.

This sequence belongs to the EPSP synthase family. MurA subfamily.

Its subcellular location is the cytoplasm. It carries out the reaction phosphoenolpyruvate + UDP-N-acetyl-alpha-D-glucosamine = UDP-N-acetyl-3-O-(1-carboxyvinyl)-alpha-D-glucosamine + phosphate. The protein operates within cell wall biogenesis; peptidoglycan biosynthesis. In terms of biological role, cell wall formation. Adds enolpyruvyl to UDP-N-acetylglucosamine. The protein is UDP-N-acetylglucosamine 1-carboxyvinyltransferase 2 of Geobacillus kaustophilus (strain HTA426).